Consider the following 124-residue polypeptide: Small ribosomal subunit protein uS13 (124 aa).

Residues Pro-99 to Lys-124 are disordered. Over residues Lys-113–Lys-124 the composition is skewed to basic residues.

The protein belongs to the universal ribosomal protein uS13 family. As to quaternary structure, part of the 30S ribosomal subunit. Forms a loose heterodimer with protein S19. Forms two bridges to the 50S subunit in the 70S ribosome.

Its function is as follows. Located at the top of the head of the 30S subunit, it contacts several helices of the 16S rRNA. In the 70S ribosome it contacts the 23S rRNA (bridge B1a) and protein L5 of the 50S subunit (bridge B1b), connecting the 2 subunits; these bridges are implicated in subunit movement. Contacts the tRNAs in the A and P-sites. This is Small ribosomal subunit protein uS13 from Lachnospira eligens (strain ATCC 27750 / DSM 3376 / VPI C15-48 / C15-B4) (Eubacterium eligens).